Consider the following 112-residue polypeptide: Abdominal ganglion neuropeptides L5-67 (112 aa).

A signal peptide spans M1 to S23. At F33 the chain carries Phenylalanine amide.

The prohormone is proteolytically cleaved in 2 steps, yielding first 2 products: luqin and PRMP. In the second step, PRMP is cleaved to yield luqin-B and luqin-C. Neurons L2-4 and L6, also called giant dorsal LUQ (Left Upper Quadrant) neurons of the abdominal ganglion. Also expressed in smaller neurons in the CNS and in peripheral organs such as the kidney.

The protein localises to the secreted. This Aplysia californica (California sea hare) protein is Abdominal ganglion neuropeptides L5-67.